A 635-amino-acid chain; its full sequence is Chaperone protein DnaK (635 aa).

T198 bears the Phosphothreonine; by autocatalysis mark. The interval Y598–K635 is disordered. Basic and acidic residues predominate over residues H613–D624. Acidic residues predominate over residues A625–K635.

It belongs to the heat shock protein 70 family.

In terms of biological role, acts as a chaperone. The protein is Chaperone protein DnaK of Geotalea uraniireducens (strain Rf4) (Geobacter uraniireducens).